A 489-amino-acid chain; its full sequence is Lysine--tRNA ligase (489 aa).

Mg(2+) is bound by residues glutamate 399 and glutamate 406.

Belongs to the class-II aminoacyl-tRNA synthetase family. Homodimer. It depends on Mg(2+) as a cofactor.

It localises to the cytoplasm. It carries out the reaction tRNA(Lys) + L-lysine + ATP = L-lysyl-tRNA(Lys) + AMP + diphosphate. This chain is Lysine--tRNA ligase, found in Malacoplasma penetrans (strain HF-2) (Mycoplasma penetrans).